A 102-amino-acid chain; its full sequence is uncharacterized protein (102 aa).

The next 2 membrane-spanning stretches (helical) occupy residues 28-48 (YLNL…LISI) and 81-101 (LSVL…AGIG).

The protein resides in the membrane. This is an uncharacterized protein from Saccharomyces cerevisiae (strain ATCC 204508 / S288c) (Baker's yeast).